Reading from the N-terminus, the 369-residue chain is Peptide chain release factor 2 (369 aa).

Position 250 is an N5-methylglutamine (glutamine 250).

Belongs to the prokaryotic/mitochondrial release factor family. Methylated by PrmC. Methylation increases the termination efficiency of RF2.

It is found in the cytoplasm. In terms of biological role, peptide chain release factor 2 directs the termination of translation in response to the peptide chain termination codons UGA and UAA. The chain is Peptide chain release factor 2 (prfB) from Rickettsia typhi (strain ATCC VR-144 / Wilmington).